Consider the following 420-residue polypeptide: WD repeat-containing protein 21 (420 aa).

The DDB-boX motif lies at 73-75; that stretch reads RQF. 3 WD repeats span residues 251–289, 293–332, and 341–383; these read QSKG…ECVQ, HGSS…SKKR, and GHSN…PFKE.

The protein localises to the cytoplasm. The protein resides in the nucleus. In Schizosaccharomyces pombe (strain 972 / ATCC 24843) (Fission yeast), this protein is WD repeat-containing protein 21 (wdr21).